A 59-amino-acid chain; its full sequence is MAKIQITLTRSIIGRPETQRKTVKALGLTKMHSSVEVEDNPAIRGQINKVSHLVTVKEL.

It belongs to the universal ribosomal protein uL30 family. In terms of assembly, part of the 50S ribosomal subunit.

The chain is Large ribosomal subunit protein uL30 from Macrococcus caseolyticus (strain JCSC5402) (Macrococcoides caseolyticum).